Here is a 98-residue protein sequence, read N- to C-terminus: NADH-ubiquinone oxidoreductase chain 4L (98 aa).

The next 3 helical transmembrane spans lie at Met1 to Val21, Ser29 to Leu49, and Ile61 to Val81.

It belongs to the complex I subunit 4L family. Core subunit of respiratory chain NADH dehydrogenase (Complex I) which is composed of 45 different subunits.

The protein resides in the mitochondrion inner membrane. It catalyses the reaction a ubiquinone + NADH + 5 H(+)(in) = a ubiquinol + NAD(+) + 4 H(+)(out). Functionally, core subunit of the mitochondrial membrane respiratory chain NADH dehydrogenase (Complex I) which catalyzes electron transfer from NADH through the respiratory chain, using ubiquinone as an electron acceptor. Part of the enzyme membrane arm which is embedded in the lipid bilayer and involved in proton translocation. This Orycteropus afer (Aardvark) protein is NADH-ubiquinone oxidoreductase chain 4L (MT-ND4L).